We begin with the raw amino-acid sequence, 107 residues long: Thioredoxin (107 aa).

The region spanning 2 to 107 (SVEAVVKQVD…GIRELIQANA (106 aa)) is the Thioredoxin domain. Active-site nucleophile residues include cysteine 34 and cysteine 37. Cysteines 34 and 37 form a disulfide.

Belongs to the thioredoxin family.

Its function is as follows. Participates in various redox reactions through the reversible oxidation of its active center dithiol to a disulfide and catalyzes dithiol-disulfide exchange reactions. The chain is Thioredoxin (TRX) from Echinococcus granulosus (Hydatid tapeworm).